The chain runs to 270 residues: 5'-AMP-activated protein kinase subunit beta-1 (270 aa).

Residues 1–43 (MGNTSSERAALERHGGHKTPRRDSSGGTKDGDRPKILMDSPED) are disordered. Residue glycine 2 is the site of N-myristoyl glycine attachment. Phosphothreonine is present on threonine 4. Phosphoserine occurs at positions 5 and 6. A Phosphothreonine modification is found at threonine 19. Residues 21–36 (RRDSSGGTKDGDRPKI) show a composition bias toward basic and acidic residues. Serine 24 and serine 25 each carry phosphoserine; by autocatalysis. Serine 40, serine 96, serine 101, and serine 108 each carry phosphoserine. A glycogen-binding domain region spans residues 68–163 (EVNDKAPAQA…QVKKTDFEVF (96 aa)). The residue at position 148 (threonine 148) is a Phosphothreonine. Serine 182 is subject to Phosphoserine.

This sequence belongs to the 5'-AMP-activated protein kinase beta subunit family. AMPK is a heterotrimer of an alpha catalytic subunit (PRKAA1 or PRKAA2), a beta (PRKAB1 or PRKAB2) and a gamma non-catalytic subunits (PRKAG1, PRKAG2 or PRKAG3). Interacts with FNIP1 and FNIP2. Post-translationally, phosphorylated when associated with the catalytic subunit (PRKAA1 or PRKAA2). Phosphorylated by ULK1; leading to negatively regulate AMPK activity and suggesting the existence of a regulatory feedback loop between ULK1 and AMPK.

Non-catalytic subunit of AMP-activated protein kinase (AMPK), an energy sensor protein kinase that plays a key role in regulating cellular energy metabolism. In response to reduction of intracellular ATP levels, AMPK activates energy-producing pathways and inhibits energy-consuming processes: inhibits protein, carbohydrate and lipid biosynthesis, as well as cell growth and proliferation. AMPK acts via direct phosphorylation of metabolic enzymes, and by longer-term effects via phosphorylation of transcription regulators. Also acts as a regulator of cellular polarity by remodeling the actin cytoskeleton; probably by indirectly activating myosin. Beta non-catalytic subunit acts as a scaffold on which the AMPK complex assembles, via its C-terminus that bridges alpha (PRKAA1 or PRKAA2) and gamma subunits (PRKAG1, PRKAG2 or PRKAG3). This Homo sapiens (Human) protein is 5'-AMP-activated protein kinase subunit beta-1 (PRKAB1).